Here is a 2144-residue protein sequence, read N- to C-terminus: Cadherin EGF LAG seven-pass G-type receptor 2 (2144 aa).

4 consecutive Cadherin domains span residues 1–40 (EDQVSYTLAITARDNGIPQKSDTTYLEILVNDVNDNAPQF), 41–146 (LRDS…PPVF), 147–248 (EQDE…PPVL), and 253–371 (ILFN…SPLL). Residues 1-1605 (EDQVSYTLAI…GEILPLKTLT (1605 aa)) lie on the Extracellular side of the membrane. 4 N-linked (GlcNAc...) asparagine glycosylation sites follow: Asn-261, Asn-301, Asn-407, and Asn-437. Residues 453 to 511 (DDNICLREPCENYMRCVSVLRFDSSAPFIASSSVLFRPIHPVGGLRCRCPPGFTGDYCE) enclose the EGF-like 1; calcium-binding domain. Cystine bridges form between Cys-457–Cys-468, Cys-462–Cys-499, Cys-501–Cys-510, Cys-517–Cys-528, Cys-522–Cys-537, Cys-539–Cys-548, Cys-557–Cys-568, Cys-562–Cys-578, and Cys-580–Cys-590. One can recognise an EGF-like 2; calcium-binding domain in the interval 513–549 (EVDLCYSRPCGPHGHCRSREGGYTCLCRDGYTGEHCE). One can recognise an EGF-like 3; calcium-binding domain in the interval 553 to 591 (RSGRCTPGVCKNGGTCVNLLVGGFKCDCPSGDFEKPFCQ). The region spanning 592-796 (VTTRSFPARS…IANNGTVPGC (205 aa)) is the Laminin G-like 1 domain. Asn-726 and Asn-790 each carry an N-linked (GlcNAc...) asparagine glycan. 4 disulfides stabilise this stretch: Cys-770–Cys-796, Cys-803–Cys-814, Cys-808–Cys-823, and Cys-825–Cys-834. The EGF-like 4; calcium-binding domain maps to 799–835 (KKNVCDSNTCHNGGTCVNQWDAFSCECPLGFGGKSCA). Residue Asn-816 is modified to (3R)-3-hydroxyasparagine. The 178-residue stretch at 839 to 1016 (ANPQRFLGSS…GESINVEPGC (178 aa)) folds into the Laminin G-like 2 domain. Asn-966 carries an N-linked (GlcNAc...) asparagine glycan. 14 disulfides stabilise this stretch: Cys-986–Cys-1016, Cys-1022–Cys-1033, Cys-1027–Cys-1042, Cys-1044–Cys-1053, Cys-1057–Cys-1068, Cys-1062–Cys-1080, Cys-1082–Cys-1091, Cys-1112–Cys-1124, Cys-1114–Cys-1131, Cys-1133–Cys-1146, Cys-1149–Cys-1161, Cys-1151–Cys-1168, Cys-1170–Cys-1179, and Cys-1182–Cys-1194. Residues 1018–1053 (WPDPCDSNPCPTNSYCSNDWDSYSCSCDPGYYGDNC) form the EGF-like 5; calcium-binding domain. At Asn-1035 the chain carries (3R)-3-hydroxyasparagine. N-linked (GlcNAc...) asparagine glycosylation occurs at Asn-1052. The EGF-like 6; calcium-binding domain occupies 1054–1092 (TNVCDLNPCEHQSACTRKPSAPHGYICECLPNYLGPYCE). The EGF-like 7; calcium-binding domain occupies 1108-1147 (TCGPCNCDVSKGFDPDCNKTSGECHCKENHYRPPSSPTCL). A glycan (N-linked (GlcNAc...) asparagine) is linked at Asn-1125. Residues 1149–1196 (CDCYPTGSLSRVCDPEDGQCPCKPGVIGRQCDRCDNPFAEVTTNGCEV) form the Laminin EGF-like domain. Residues Asn-1249, Asn-1268, and Asn-1286 are each glycosylated (N-linked (GlcNAc...) asparagine). The GAIN-B domain maps to 1424–1594 (ETTVILPESV…AVLMDVSRRE (171 aa)). The tract at residues 1439-1466 (PMVRSAGPGEAQETEELARRQRRHPELS) is disordered. Disulfide bonds link Cys-1544–Cys-1576 and Cys-1564–Cys-1578. Residues 1544-1594 (CVFWNHSILVSGTGGWSARGCEVVFRNESHVSCQCNHMTSFAVLMDVSRRE) form a GPS region. Residues Asn-1548 and Asn-1570 are each glycosylated (N-linked (GlcNAc...) asparagine). A helical membrane pass occupies residues 1606 to 1626 (YVALGVTLAALMITFLFLTLL). Residues 1627-1641 (RALRSNQHGIRRNLT) lie on the Cytoplasmic side of the membrane. A helical transmembrane segment spans residues 1642–1662 (AALGLAQLVFLLGINQADLPF). A topological domain (extracellular) is located at residue Ala-1663. Residues 1664–1684 (CTVIAILLHFLYLCTFSWALL) form a helical membrane-spanning segment. Topologically, residues 1685 to 1705 (EALHLYRALTEVRDVNASPMR) are cytoplasmic. Residues 1706-1726 (FYYMLGWGVPAFITGLAVGLD) traverse the membrane as a helical segment. Residues 1727–1744 (PEGYGNPDFCWLSIYDTL) lie on the Extracellular side of the membrane. A helical transmembrane segment spans residues 1745–1765 (IWSFAGPVAFAVSMSVFLYIL). The Cytoplasmic segment spans residues 1766 to 1789 (SARASCAAQRQGFEKKGPVSGLRS). Residues 1790 to 1810 (SFTVLLLLSATWLLALLSVNS) traverse the membrane as a helical segment. The Extracellular segment spans residues 1811–1816 (DTLLFH). The chain crosses the membrane as a helical span at residues 1817–1837 (YLFAACNCVQGPFIFLSYVVL). At 1838-2144 (SKEVRKALKF…SEFLFFNFLH (307 aa)) the chain is on the cytoplasmic side. Positions 1914 to 2109 (TLNPGQVPPG…PPRPPPRQSL (196 aa)) are disordered. Residues 1943 to 1955 (TDSDSDLSLEDDQ) are compositionally biased toward acidic residues. Polar residues predominate over residues 2016–2025 (GTTTKENSGS). The segment covering 2028 to 2040 (LEERPRENGDALT) has biased composition (basic and acidic residues). Residues 2082–2095 (GTGSSRGSTASEGS) are compositionally biased toward polar residues.

This sequence belongs to the G-protein coupled receptor 2 family. LN-TM7 subfamily. Heterodimer of 2 chains generated by proteolytic processing; the large extracellular N-terminal fragment and the membrane-bound C-terminal fragment predominantly remain associated and non-covalently linked. In terms of processing, the iron and 2-oxoglutarate dependent 3-hydroxylation of aspartate and asparagine is (R) stereospecific within EGF domains. Post-translationally, autoproteolytically processed at the GPS region of the GAIN-B domain; this cleavage modulates receptor activity. In terms of tissue distribution, expressed in the brain. High expression in cerebellum and olfactory bulb. Weaker expression in cerebral cortex, hippocampus and brain stem.

It is found in the cell membrane. In terms of biological role, receptor that may have an important role in cell/cell signaling during nervous system formation. The sequence is that of Cadherin EGF LAG seven-pass G-type receptor 2 from Rattus norvegicus (Rat).